A 288-amino-acid chain; its full sequence is Transformer-2 protein homolog beta (288 aa).

2 disordered regions span residues 1–114 (MSDS…RANP) and 196–225 (TKRP…YDRG). Ser-2 is subject to N-acetylserine. A phosphoserine mark is found at Ser-2, Ser-4, and Ser-14. A compositionally biased stretch (low complexity) spans 17–28 (ASRSGSAHGSGK). Phosphoserine is present on Ser-29. A Phosphothreonine modification is found at Thr-33. Residues 59–109 (RSRRSSRRHYTRSRSRSRSHRRSRSRSYSRDYRRRHSHSHSPMSTRRRHVG) are compositionally biased toward basic residues. 6 positions are modified to phosphoserine: Ser-83, Ser-85, Ser-87, Ser-95, Ser-97, and Ser-99. Thr-103 carries the post-translational modification Phosphothreonine. In terms of domain architecture, RRM spans 118-196 (CCLGVFGLSL…RRIRVDFSIT (79 aa)). A linker region spans residues 193–230 (FSITKRPHTPTPGIYMGRPTYGSSRRRDYYDRGYDRGY). Lys-197 participates in a covalent cross-link: Glycyl lysine isopeptide (Lys-Gly) (interchain with G-Cter in SUMO2). Phosphothreonine is present on residues Thr-201 and Thr-203. Ser-215 and Ser-237 each carry phosphoserine. The residue at position 241 (Arg-241) is an Asymmetric dimethylarginine; alternate. Arg-241 carries the post-translational modification Dimethylated arginine; alternate. Arg-241 is modified (omega-N-methylarginine; alternate). The disordered stretch occupies residues 242–288 (GGGGGGGGWRAAQDRDQIYRRRSPSPYYSRGGYRSRSRSRSYSPRRY). Positions 274 to 288 (YRSRSRSRSYSPRRY) are enriched in basic residues.

The protein belongs to the splicing factor SR family. Found in a pre-mRNA exonic splicing enhancer (ESE) complex with TRA2B/SFRS10, SNRNP70, SNRPA1 and SRRM1. Binds to A3 enhancer proteins SFRS4, SFRS5, SFRS6 and SFRS9. Interacts with CPSF6, RBMY1A1, RBMX, RNPS1 and phosphorylated SFRS13A. Interacts with SAFB/SAFB1. Interacts with ILDR1 (via C-terminus) and ILDR2. In terms of processing, phosphorylated in the RS domains.

The protein localises to the nucleus. Its function is as follows. Sequence-specific RNA-binding protein which participates in the control of pre-mRNA splicing. Can either activate or suppress exon inclusion. Acts additively with RBMX to promote exon 7 inclusion of the survival motor neuron SMN2. Activates the splicing of MAPT/Tau exon 10. Alters pre-mRNA splicing patterns by antagonizing the effects of splicing regulators, like RBMX. Binds to the AG-rich SE2 domain in the SMN exon 7 RNA. Binds to pre-mRNA. The polypeptide is Transformer-2 protein homolog beta (TRA2B) (Bos taurus (Bovine)).